Here is a 400-residue protein sequence, read N- to C-terminus: Large envelope protein (400 aa).

M1 carries the post-translational modification N-acetylmethionine. Disordered stretches follow at residues M1 to D42 and I84 to Q118. Residue G2 is the site of N-myristoyl glycine; by host attachment. Residues G2–A119 form a pre-S1 region. Residues G2–K174 form a pre-S region. At G2–G181 the chain is on the virion surface; in external conformation side. The Intravirion; in internal conformation portion of the chain corresponds to G2–R253. Y4 carries an N-linked (GlcNAc...) asparagine glycan. Residues M120–K174 form a pre-S2 region. The helical transmembrane segment at F182 to I202 threads the bilayer. Residues P203–R253 are Intravirion; in external conformation-facing. A helical membrane pass occupies residues F254–Y274. The Virion surface segment spans residues Q275 to S348. An N-linked (GlcNAc...) asparagine; by host glycan is attached at N320. Residues L349–I369 form a helical membrane-spanning segment. Topologically, residues W370–W375 are intravirion. A helical membrane pass occupies residues G376–V398. Residues Y399–I400 lie on the Virion surface side of the membrane.

The protein belongs to the orthohepadnavirus major surface antigen family. As to quaternary structure, in its internal form (Li-HBsAg), interacts with the capsid protein and with the isoform S. Interacts with host chaperone CANX. Associates with host chaperone CANX through its pre-S2 N glycan; this association may be essential for isoform M proper secretion. In terms of assembly, interacts with isoform L. Interacts with the antigens of satellite virus HDV (HDVAgs); this interaction is required for encapsidation of HDV genomic RNA. In terms of processing, isoform M is N-terminally acetylated by host at a ratio of 90%, and N-glycosylated by host at the pre-S2 region. Myristoylated.

The protein localises to the virion membrane. In terms of biological role, the large envelope protein exists in two topological conformations, one which is termed 'external' or Le-HBsAg and the other 'internal' or Li-HBsAg. In its external conformation the protein attaches the virus to cell receptors and thereby initiating infection. This interaction determines the species specificity and liver tropism. This attachment induces virion internalization predominantly through caveolin-mediated endocytosis. The large envelope protein also assures fusion between virion membrane and endosomal membrane. In its internal conformation the protein plays a role in virion morphogenesis and mediates the contact with the nucleocapsid like a matrix protein. The middle envelope protein plays an important role in the budding of the virion. It is involved in the induction of budding in a nucleocapsid independent way. In this process the majority of envelope proteins bud to form subviral lipoprotein particles of 22 nm of diameter that do not contain a nucleocapsid. In Homo sapiens (Human), this protein is Large envelope protein.